The chain runs to 279 residues: Tryptophan 2,3-dioxygenase (279 aa).

Substrate contacts are provided by residues Phe-48–His-52, Tyr-110, and Arg-114. Residue His-237 participates in heme binding. Substrate is bound at residue Thr-251.

It belongs to the tryptophan 2,3-dioxygenase family. In terms of assembly, homotetramer. Heme is required as a cofactor.

It carries out the reaction L-tryptophan + O2 = N-formyl-L-kynurenine. The protein operates within amino-acid degradation; L-tryptophan degradation via kynurenine pathway; L-kynurenine from L-tryptophan: step 1/2. Functionally, heme-dependent dioxygenase that catalyzes the oxidative cleavage of the L-tryptophan (L-Trp) pyrrole ring and converts L-tryptophan to N-formyl-L-kynurenine. Catalyzes the oxidative cleavage of the indole moiety. The sequence is that of Tryptophan 2,3-dioxygenase from Exiguobacterium sibiricum (strain DSM 17290 / CCUG 55495 / CIP 109462 / JCM 13490 / 255-15).